A 644-amino-acid polypeptide reads, in one-letter code: Exoribonuclease 2 (644 aa).

In terms of domain architecture, RNB spans 190–516 (REDLTALDFI…INHRLLKALI (327 aa)). Residues 562–644 (DSRFAAEIID…ENRSVIARPV (83 aa)) form the S1 motif domain.

This sequence belongs to the RNR ribonuclease family. RNase II subfamily.

Its subcellular location is the cytoplasm. It catalyses the reaction Exonucleolytic cleavage in the 3'- to 5'-direction to yield nucleoside 5'-phosphates.. In terms of biological role, involved in mRNA degradation. Hydrolyzes single-stranded polyribonucleotides processively in the 3' to 5' direction. The protein is Exoribonuclease 2 of Sodalis glossinidius (strain morsitans).